The primary structure comprises 353 residues: UPF0283 membrane protein YcjF (353 aa).

The segment covering 1 to 19 (MSEPLKPRIDFAEPLKEEP) has biased composition (basic and acidic residues). The interval 1–35 (MSEPLKPRIDFAEPLKEEPTSAFKAQQTFSEAESR) is disordered. 3 helical membrane passes run 70-90 (MVMGGLALFGASVVGQGVQWT), 100-120 (VALGGCAAGALIVGAGVGSVV), and 213-233 (ESTLMIAVSPLALVDMAFIAW).

The protein belongs to the UPF0283 family.

It localises to the cell inner membrane. This is UPF0283 membrane protein YcjF from Salmonella paratyphi A (strain AKU_12601).